We begin with the raw amino-acid sequence, 400 residues long: GTPase-binding protein rid1 (400 aa).

Residues 16 to 27 (LSSDGLSESVNS) are compositionally biased toward polar residues. Positions 16 to 47 (LSSDGLSESVNSSDREDSLSFQTPSTPSEDEM) are disordered. Positions 39 to 400 (PSTPSEDEMP…PYKLVQTGST (362 aa)) constitute a GBD/FH3 domain.

The protein localises to the cytoplasm. This chain is GTPase-binding protein rid1 (rid1), found in Schizosaccharomyces pombe (strain 972 / ATCC 24843) (Fission yeast).